Reading from the N-terminus, the 260-residue chain is Ribose-5-phosphate isomerase A (260 aa).

Residues 33 to 36 (TGST), 89 to 92 (DGAD), and 102 to 105 (KGGG) contribute to the substrate site. Glutamate 111 (proton acceptor) is an active-site residue. Lysine 129 serves as a coordination point for substrate.

It belongs to the ribose 5-phosphate isomerase family. Homodimer.

The enzyme catalyses aldehydo-D-ribose 5-phosphate = D-ribulose 5-phosphate. Its pathway is carbohydrate degradation; pentose phosphate pathway; D-ribose 5-phosphate from D-ribulose 5-phosphate (non-oxidative stage): step 1/1. Catalyzes the reversible conversion of ribose-5-phosphate to ribulose 5-phosphate. This Dinoroseobacter shibae (strain DSM 16493 / NCIMB 14021 / DFL 12) protein is Ribose-5-phosphate isomerase A.